Reading from the N-terminus, the 1417-residue chain is DNA-directed RNA polymerase subunit beta' (1417 aa).

Zn(2+) contacts are provided by Cys68, Cys70, Cys83, and Cys86. Asp458, Asp460, and Asp462 together coordinate Mg(2+). Zn(2+)-binding residues include Cys811, Cys884, Cys891, and Cys894.

The protein belongs to the RNA polymerase beta' chain family. The RNAP catalytic core consists of 2 alpha, 1 beta, 1 beta' and 1 omega subunit. When a sigma factor is associated with the core the holoenzyme is formed, which can initiate transcription. Mg(2+) is required as a cofactor. Requires Zn(2+) as cofactor.

The catalysed reaction is RNA(n) + a ribonucleoside 5'-triphosphate = RNA(n+1) + diphosphate. Functionally, DNA-dependent RNA polymerase catalyzes the transcription of DNA into RNA using the four ribonucleoside triphosphates as substrates. The polypeptide is DNA-directed RNA polymerase subunit beta' (Francisella tularensis subsp. mediasiatica (strain FSC147)).